Reading from the N-terminus, the 179-residue chain is Inner membrane-spanning protein YciB (179 aa).

6 consecutive transmembrane segments (helical) span residues 3–23 (FLFDLFPVILFFAAFKLADIY), 24–44 (TATAVAIGATVLQIGWVWFRH), 49–69 (PMQWVSLLIIAVFGGATLVLH), 76–96 (WKPTVLYWMFAVGLLGSVIGW), 121–141 (AAWAGFFAAMGVLNLYVAYQF), and 149–169 (FKLFGSMGLMLVFIVAQSVWL).

It belongs to the YciB family.

Its subcellular location is the cell inner membrane. Functionally, plays a role in cell envelope biogenesis, maintenance of cell envelope integrity and membrane homeostasis. The protein is Inner membrane-spanning protein YciB of Cupriavidus necator (strain ATCC 17699 / DSM 428 / KCTC 22496 / NCIMB 10442 / H16 / Stanier 337) (Ralstonia eutropha).